The chain runs to 139 residues: Small ribosomal subunit protein uS12 (139 aa).

D102 carries the post-translational modification 3-methylthioaspartic acid.

The protein belongs to the universal ribosomal protein uS12 family. In terms of assembly, part of the 30S ribosomal subunit. Contacts proteins S8 and S17. May interact with IF1 in the 30S initiation complex.

Functionally, with S4 and S5 plays an important role in translational accuracy. Interacts with and stabilizes bases of the 16S rRNA that are involved in tRNA selection in the A site and with the mRNA backbone. Located at the interface of the 30S and 50S subunits, it traverses the body of the 30S subunit contacting proteins on the other side and probably holding the rRNA structure together. The combined cluster of proteins S8, S12 and S17 appears to hold together the shoulder and platform of the 30S subunit. The protein is Small ribosomal subunit protein uS12 of Bacillus pumilus (strain SAFR-032).